Reading from the N-terminus, the 452-residue chain is UDP-N-acetylmuramoylalanine--D-glutamate ligase (452 aa).

Residue 119–125 (GSNGKTT) participates in ATP binding.

Belongs to the MurCDEF family.

It is found in the cytoplasm. The catalysed reaction is UDP-N-acetyl-alpha-D-muramoyl-L-alanine + D-glutamate + ATP = UDP-N-acetyl-alpha-D-muramoyl-L-alanyl-D-glutamate + ADP + phosphate + H(+). It participates in cell wall biogenesis; peptidoglycan biosynthesis. Functionally, cell wall formation. Catalyzes the addition of glutamate to the nucleotide precursor UDP-N-acetylmuramoyl-L-alanine (UMA). The polypeptide is UDP-N-acetylmuramoylalanine--D-glutamate ligase (Streptococcus pyogenes serotype M6 (strain ATCC BAA-946 / MGAS10394)).